Reading from the N-terminus, the 308-residue chain is Glycine--tRNA ligase alpha subunit (308 aa).

Belongs to the class-II aminoacyl-tRNA synthetase family. Tetramer of two alpha and two beta subunits.

Its subcellular location is the cytoplasm. The enzyme catalyses tRNA(Gly) + glycine + ATP = glycyl-tRNA(Gly) + AMP + diphosphate. The sequence is that of Glycine--tRNA ligase alpha subunit from Polaromonas naphthalenivorans (strain CJ2).